The sequence spans 221 residues: Probable septum site-determining protein MinC (221 aa).

It belongs to the MinC family. Interacts with MinD and FtsZ.

In terms of biological role, cell division inhibitor that blocks the formation of polar Z ring septums. Rapidly oscillates between the poles of the cell to destabilize FtsZ filaments that have formed before they mature into polar Z rings. Prevents FtsZ polymerization. This is Probable septum site-determining protein MinC from Shewanella denitrificans (strain OS217 / ATCC BAA-1090 / DSM 15013).